Here is a 381-residue protein sequence, read N- to C-terminus: Cytochrome b (381 aa).

Helical transmembrane passes span 34–54 (FGSL…FLAM), 78–99 (WLIR…YFHI), 114–134 (WNIG…GYVL), and 179–199 (FFAF…IHVL). Positions 84 and 98 each coordinate heme b. Heme b is bound by residues histidine 183 and histidine 197. An a ubiquinone-binding site is contributed by histidine 202. Helical transmembrane passes span 227–247 (YKDA…ALFL), 289–309 (LGGV…PFLH), 321–341 (LTQI…WIGG), and 348–368 (FILI…IALP).

Belongs to the cytochrome b family. The cytochrome bc1 complex contains 3 respiratory subunits (MT-CYB, CYC1 and UQCRFS1), 2 core proteins (UQCRC1 and UQCRC2) and probably 6 low-molecular weight proteins. Heme b serves as cofactor.

It is found in the mitochondrion inner membrane. Functionally, component of the ubiquinol-cytochrome c reductase complex (complex III or cytochrome b-c1 complex) that is part of the mitochondrial respiratory chain. The b-c1 complex mediates electron transfer from ubiquinol to cytochrome c. Contributes to the generation of a proton gradient across the mitochondrial membrane that is then used for ATP synthesis. The chain is Cytochrome b (mt-cyb) from Isurus oxyrinchus (Shortfin mako shark).